A 459-amino-acid chain; its full sequence is Vicilin (459 aa).

Residues 1-28 (MAATTMKASFPLLMLMGISFLASVCVSS) form the signal peptide. The 159-residue stretch at 36-194 (FIFKSNKFQT…SFNTDYEEIE (159 aa)) folds into the Cupin type-1 1 domain. 3 disordered regions span residues 235 to 258 (LSKN…NLRS), 321 to 346 (ELVG…QGEE), and 430 to 459 (ENQK…LSSV). A compositionally biased stretch (low complexity) spans 238 to 251 (NAKSTSKKSVSSES). Residues 254 to 426 (FNLRSRGPIY…AFPGSAQEVD (173 aa)) form the Cupin type-1 2 domain. A compositionally biased stretch (acidic residues) spans 337–346 (DDEEEEQGEE). Positions 444–459 (QRERGSRETRDRLSSV) are enriched in basic and acidic residues.

Belongs to the 7S seed storage protein family.

The protein localises to the vacuole. It is found in the aleurone grain. Functionally, seed storage protein. In Pisum sativum (Garden pea), this protein is Vicilin.